Here is an 832-residue protein sequence, read N- to C-terminus: Dolichyl-phosphate-mannose--protein mannosyltransferase 6 (832 aa).

The segment at 1-44 (MATGYSTGVSPFDLDENNHNDSIHHRHQNHHSQSHDSSGERDDT) is disordered. N-linked (GlcNAc...) asparagine glycosylation is found at Asn20 and Asn59. A run of 7 helical transmembrane segments spans residues 135 to 155 (FYFD…GYLA), 175 to 194 (YVFM…PLAY), 206 to 227 (TCWL…SKFI), 232 to 252 (MLLF…TLAI), 266 to 286 (LEIK…SVKW), 293 to 311 (ALVG…YQTF), and 327 to 347 (LIHW…IYVA). The N-linked (GlcNAc...) asparagine glycan is linked to Asn357. The region spanning 383-437 (PRSVAFGSLVTIRSQGLSPNLIHSHPHNYPQGSQEQQVTTYGFKDDNNEFLFEFG) is the MIR 1 domain. N-linked (GlcNAc...) asparagine glycosylation is present at Asn453. MIR domains lie at 466–522 (HVII…IEIQ) and 537–595 (PSEI…IEKH). A run of 4 helical transmembrane segments spans residues 676-696 (ITWI…VVGI), 723-743 (LLAA…VPFI), 755-775 (VPAL…ILNL), and 787-807 (IFKV…FWYF).

It belongs to the glycosyltransferase 39 family.

It localises to the endoplasmic reticulum membrane. It catalyses the reaction a di-trans,poly-cis-dolichyl beta-D-mannosyl phosphate + L-seryl-[protein] = 3-O-(alpha-D-mannosyl)-L-seryl-[protein] + a di-trans,poly-cis-dolichyl phosphate + H(+). The catalysed reaction is a di-trans,poly-cis-dolichyl beta-D-mannosyl phosphate + L-threonyl-[protein] = 3-O-(alpha-D-mannosyl)-L-threonyl-[protein] + a di-trans,poly-cis-dolichyl phosphate + H(+). Its pathway is protein modification; protein glycosylation. Its function is as follows. Protein mannosyltransferase (PMT) involved in hyphal morphogenesis and drug sensitivity. Transfers mannose from Dol-P-mannose to Ser or Thr residues on proteins. PMT1, PMT2 and PMT4 account for most of the protein-O-glycosylation activity, while PMT5 and PMT6 may specifically modulate a much narrower spectrum of target proteins. Required for biofilm formation and virulence. The chain is Dolichyl-phosphate-mannose--protein mannosyltransferase 6 (PMT6) from Candida albicans (strain SC5314 / ATCC MYA-2876) (Yeast).